The sequence spans 330 residues: Ferric enterobactin transport system permease protein FepG (330 aa).

The Periplasmic segment spans residues 1-7 (MIYVSRR). The chain crosses the membrane as a helical span at residues 8-28 (LLITCLLLVSACVVAGIWGLR). Topologically, residues 29-62 (SGAVTLETSQVFAALMGDAPRSMTMVVTEWRLPR) are cytoplasmic. A helical transmembrane segment spans residues 63-83 (VLMALLIGAALGVSGAIFQSL). At 84–92 (MRNPLGSPD) the chain is on the periplasmic side. Residues 93–113 (VMGFNTGAWSGVLVAMVLFGQ) traverse the membrane as a helical segment. Topologically, residues 114–117 (DLTA) are cytoplasmic. Residues 118–138 (IALSAMVGGIVTSLLVWLLAW) traverse the membrane as a helical segment. Residues 139–146 (RNGIDTFR) lie on the Periplasmic side of the membrane. Residues 147 to 167 (LIIIGIGVRAMLVAFNTWLLL) traverse the membrane as a helical segment. Topologically, residues 168 to 190 (KASLETALTAGLWNAGSLNGLTW) are cytoplasmic. A helical membrane pass occupies residues 191 to 211 (AKTSPSAPIIILMLIAAALLV). Residues 212–235 (RRMRLLEMGDDTACALGVSVERSR) are Periplasmic-facing. The chain crosses the membrane as a helical span at residues 236 to 256 (LLMMLVAVVLTAAATALAGPI). Over 257–275 (SFIALVAPHIARRISGTAR) the chain is Cytoplasmic. A helical transmembrane segment spans residues 276 to 296 (WGLTQAALCGALLLLAADLCA). Over 297 to 303 (QQLFMPY) the chain is Periplasmic. Residues 304-324 (QLPVGVVTVSLGGIYLIVLLI) form a helical membrane-spanning segment. Topologically, residues 325 to 330 (QESRKK) are cytoplasmic.

The protein belongs to the binding-protein-dependent transport system permease family. FecCD subfamily. The complex is composed of two ATP-binding proteins (FepC), two transmembrane proteins (FepD and FepG) and a solute-binding protein (FepB).

The protein resides in the cell inner membrane. Functionally, part of the ABC transporter complex FepBDGC involved in ferric enterobactin uptake. Responsible for the translocation of the substrate across the membrane. This chain is Ferric enterobactin transport system permease protein FepG (fepG), found in Escherichia coli (strain K12).